A 400-amino-acid polypeptide reads, in one-letter code: Phosphoglycerate kinase (400 aa).

Residues 21-23, Arg-36, 59-62, Arg-119, and Arg-160 each bind substrate; these read DFN and HLGR. ATP contacts are provided by residues Lys-211, Glu-329, and 356–359; that span reads GGDS.

Belongs to the phosphoglycerate kinase family. In terms of assembly, monomer.

The protein resides in the cytoplasm. It carries out the reaction (2R)-3-phosphoglycerate + ATP = (2R)-3-phospho-glyceroyl phosphate + ADP. The protein operates within carbohydrate degradation; glycolysis; pyruvate from D-glyceraldehyde 3-phosphate: step 2/5. The protein is Phosphoglycerate kinase of Levilactobacillus brevis (strain ATCC 367 / BCRC 12310 / CIP 105137 / JCM 1170 / LMG 11437 / NCIMB 947 / NCTC 947) (Lactobacillus brevis).